Consider the following 151-residue polypeptide: Prefoldin subunit alpha (151 aa).

Belongs to the prefoldin subunit alpha family. Heterohexamer of two alpha and four beta subunits.

It localises to the cytoplasm. Its function is as follows. Molecular chaperone capable of stabilizing a range of proteins. Seems to fulfill an ATP-independent, HSP70-like function in archaeal de novo protein folding. This Sulfurisphaera tokodaii (strain DSM 16993 / JCM 10545 / NBRC 100140 / 7) (Sulfolobus tokodaii) protein is Prefoldin subunit alpha.